Reading from the N-terminus, the 232-residue chain is Orotidine 5'-phosphate decarboxylase (232 aa).

Residues Asp-13, Lys-35, Asp-62–Thr-71, Thr-121, Arg-182, Gln-191, Gly-211, and Arg-212 contribute to the substrate site. Catalysis depends on Lys-64, which acts as the Proton donor.

Belongs to the OMP decarboxylase family. Type 1 subfamily. Homodimer.

It carries out the reaction orotidine 5'-phosphate + H(+) = UMP + CO2. The protein operates within pyrimidine metabolism; UMP biosynthesis via de novo pathway; UMP from orotate: step 2/2. Catalyzes the decarboxylation of orotidine 5'-monophosphate (OMP) to uridine 5'-monophosphate (UMP). The protein is Orotidine 5'-phosphate decarboxylase of Acinetobacter baumannii (strain ACICU).